The chain runs to 375 residues: MANDAEDAVRSYLTSVKEDLMTGVSFMIPFVTIGGIFLALGYAVASLSNNVQDVFNSTGTAGWFLAQIGVAGLTLMVPVLGAYIAYAIADRPGLAPGFILSYIIQQGNVLQAAGDVIGLQGGSAGAGYLGAIVAGFLAGIVARWFKQRDVPEFIAPMMPVLLIPVATTAVLTPVMLFVLGVPISIANAGLTEFLSNMQGGGQAILLGGILGAMMAADMGGPINKVAYVFSVGLISEGVTAPMAAVMIAGMVPPIGLALSNFIAPQKYAAEMYENAKSGVLLGFSFITEGAIPYAAADPARVIPSVVAGSAVAGAASMALGVNMPAPHGGIFVVPLSNQPFMFIACILLGSIVTAVIATAIKPNFDAKMAAQSSDD.

Positions 16–370 (VKEDLMTGVS…KPNFDAKMAA (355 aa)) constitute a PTS EIIC type-2 domain. 10 consecutive transmembrane segments (helical) span residues 24 to 44 (VSFMIPFVTIGGIFLALGYAV), 68 to 88 (IGVAGLTLMVPVLGAYIAYAI), 93 to 113 (GLAPGFILSYIIQQGNVLQAA), 122 to 142 (GSAGAGYLGAIVAGFLAGIVA), 160 to 180 (VLLIPVATTAVLTPVMLFVLG), 203 to 223 (AILLGGILGAMMAADMGGPIN), 238 to 258 (VTAPMAAVMIAGMVPPIGLAL), 279 to 299 (VLLGFSFITEGAIPYAAADPA), 301 to 321 (VIPSVVAGSAVAGAASMALGV), and 340 to 360 (FMFIACILLGSIVTAVIATAI).

The protein localises to the cell membrane. Its function is as follows. The phosphoenolpyruvate-dependent sugar phosphotransferase system (sugar PTS), a major carbohydrate active transport system, catalyzes the phosphorylation of incoming sugar substrates concomitantly with their translocation across the cell membrane. The enzyme II PtfABC PTS system is involved in fructose transport. The polypeptide is PTS system fructose-specific EIIC component (Haloferax volcanii (strain ATCC 29605 / DSM 3757 / JCM 8879 / NBRC 14742 / NCIMB 2012 / VKM B-1768 / DS2) (Halobacterium volcanii)).